The primary structure comprises 522 residues: Transactivator/viroplasmin protein (522 aa).

The segment at D488 to D522 is disordered.

The protein belongs to the caulimoviridae viroplasmin family.

The protein localises to the host cytoplasm. Enhances the ribosomal termination-reinitiation event leading to the translation of major open reading frames on the polycistronic viral RNAs. This is Transactivator/viroplasmin protein from Cauliflower mosaic virus (strain D/H) (CaMV).